The primary structure comprises 166 residues: Endoribonuclease YbeY (166 aa).

Residues histidine 111, histidine 115, and histidine 121 each coordinate Zn(2+). The interval 140–166 is disordered; sequence ELGYPDPYADDESADPPHSDTPSKDHE. The segment covering 154–166 has biased composition (basic and acidic residues); sequence DPPHSDTPSKDHE.

Belongs to the endoribonuclease YbeY family. Zn(2+) is required as a cofactor.

Its subcellular location is the cytoplasm. In terms of biological role, single strand-specific metallo-endoribonuclease involved in late-stage 70S ribosome quality control and in maturation of the 3' terminus of the 16S rRNA. In Pseudomonas syringae pv. syringae (strain B728a), this protein is Endoribonuclease YbeY.